Reading from the N-terminus, the 399-residue chain is Probable peptidoglycan glycosyltransferase FtsW (399 aa).

A run of 9 helical transmembrane segments spans residues 33-53 (LVWL…STSI), 71-91 (IFYF…PIIF), 98-118 (IILI…HSIH), 160-180 (FWGF…LLAE), 182-202 (DLGT…LSGA), 204-224 (IGQF…LILL), 287-307 (IIGE…IFTI), 324-344 (IFSG…TSIN), and 359-379 (LPFI…IFFL).

This sequence belongs to the SEDS family. FtsW subfamily.

It localises to the cell inner membrane. The enzyme catalyses [GlcNAc-(1-&gt;4)-Mur2Ac(oyl-L-Ala-gamma-D-Glu-L-Lys-D-Ala-D-Ala)](n)-di-trans,octa-cis-undecaprenyl diphosphate + beta-D-GlcNAc-(1-&gt;4)-Mur2Ac(oyl-L-Ala-gamma-D-Glu-L-Lys-D-Ala-D-Ala)-di-trans,octa-cis-undecaprenyl diphosphate = [GlcNAc-(1-&gt;4)-Mur2Ac(oyl-L-Ala-gamma-D-Glu-L-Lys-D-Ala-D-Ala)](n+1)-di-trans,octa-cis-undecaprenyl diphosphate + di-trans,octa-cis-undecaprenyl diphosphate + H(+). It functions in the pathway cell wall biogenesis; peptidoglycan biosynthesis. Its function is as follows. Peptidoglycan polymerase that is essential for cell division. The chain is Probable peptidoglycan glycosyltransferase FtsW from Buchnera aphidicola subsp. Acyrthosiphon pisum (strain APS) (Acyrthosiphon pisum symbiotic bacterium).